The sequence spans 427 residues: Glucose-1-phosphate adenylyltransferase (427 aa).

Arg40, His46, and Arg52 together coordinate AMP. An alpha-D-glucose 1-phosphate-binding site is contributed by Tyr114. Arg130 contacts AMP. Alpha-D-glucose 1-phosphate contacts are provided by residues Gly179, 194 to 195 (EK), and Ser212. Arg386 is an AMP binding site.

It belongs to the bacterial/plant glucose-1-phosphate adenylyltransferase family. As to quaternary structure, homotetramer.

The catalysed reaction is alpha-D-glucose 1-phosphate + ATP + H(+) = ADP-alpha-D-glucose + diphosphate. It functions in the pathway glycan biosynthesis; glycogen biosynthesis. Its activity is regulated as follows. Allosterically activated by fructose-1,6-bisphosphate (F16BP) and inhibited by AMP. In terms of biological role, involved in the biosynthesis of ADP-glucose, a building block required for the elongation reactions to produce glycogen. Catalyzes the reaction between ATP and alpha-D-glucose 1-phosphate (G1P) to produce pyrophosphate and ADP-Glc. The protein is Glucose-1-phosphate adenylyltransferase of Cronobacter sakazakii (strain ATCC BAA-894) (Enterobacter sakazakii).